A 184-amino-acid chain; its full sequence is Ethylene-responsive transcription factor ERF024 (184 aa).

Residues Met1–Arg21 form a disordered region. The segment at residues Leu14–Pro72 is a DNA-binding region (AP2/ERF).

It belongs to the AP2/ERF transcription factor family. ERF subfamily.

It is found in the nucleus. In terms of biological role, probably acts as a transcriptional activator. Binds to the GCC-box pathogenesis-related promoter element. May be involved in the regulation of gene expression by stress factors and by components of stress signal transduction pathways. The polypeptide is Ethylene-responsive transcription factor ERF024 (ERF024) (Arabidopsis thaliana (Mouse-ear cress)).